Consider the following 283-residue polypeptide: Putative transcription factor kapC (283 aa).

The span at 1–10 (MQPTLAPAPH) shows a compositional bias: pro residues. Residues 1–121 (MQPTLAPAPH…NRAAQRAFRQ (121 aa)) form a disordered region. Residues 26 to 42 (HDQLLAAHQHLSHPQQA) are compositionally biased toward low complexity. A compositionally biased stretch (polar residues) spans 55–67 (QPNTTSPRDQNNI). The region spanning 102–165 (PLSTSKRAAQ…EYIINLQSRL (64 aa)) is the bZIP domain. The segment at 103–126 (LSTSKRAAQNRAAQRAFRQRKESY) is basic motif. A compositionally biased stretch (low complexity) spans 108–118 (RAAQNRAAQRA). The interval 130-161 (LEEQVKEFDNTNETMKQLQAENYQLREYIINL) is leucine-zipper. The disordered stretch occupies residues 178–283 (NIDLNQPRND…EPGHGLPVVS (106 aa)).

This sequence belongs to the bZIP family.

It is found in the nucleus. Putative transcription factor. The polypeptide is Putative transcription factor kapC (kapC) (Aspergillus niger (strain ATCC MYA-4892 / CBS 513.88 / FGSC A1513)).